The sequence spans 217 residues: Chorionic somatomammotropin hormone 2 (217 aa).

The first 26 residues, 1-26 (MAAGSRTSLLLAFALLCLPWLQEAGA), serve as a signal peptide directing secretion. His-44 contributes to the Zn(2+) binding site. Cys-79 and Cys-191 form a disulfide bridge. Glu-200 serves as a coordination point for Zn(2+). A disulfide bridge links Cys-208 with Cys-215.

Belongs to the somatotropin/prolactin family. Can be found in a monomeric as well as dimeric form.

Its subcellular location is the secreted. Produced only during pregnancy and is involved in stimulating lactation, fetal growth and metabolism. Does not interact with GHR but only activates PRLR through zinc-induced dimerization. The sequence is that of Chorionic somatomammotropin hormone 2 (CSH2) from Homo sapiens (Human).